A 198-amino-acid polypeptide reads, in one-letter code: Recombination protein RecR (198 aa).

Residues 57 to 72 form a C4-type zinc finger; sequence CSICGNLTESDPCAIC. Residues 80–175 enclose the Toprim domain; it reads TTILVVEESK…KVTRLARGLA (96 aa).

This sequence belongs to the RecR family.

Its function is as follows. May play a role in DNA repair. It seems to be involved in an RecBC-independent recombinational process of DNA repair. It may act with RecF and RecO. This Lactococcus lactis subsp. lactis (strain IL1403) (Streptococcus lactis) protein is Recombination protein RecR.